The following is a 120-amino-acid chain: Small ribosomal subunit protein eS24 (120 aa).

A disordered region spans residues 101-120 (RDAGTKQKKGGSKGGQGAKG).

It belongs to the eukaryotic ribosomal protein eS24 family.

This is Small ribosomal subunit protein eS24 from Saccharolobus islandicus (strain M.16.4 / Kamchatka #3) (Sulfolobus islandicus).